Reading from the N-terminus, the 399-residue chain is tRNA-specific 2-thiouridylase MnmA (399 aa).

ATP contacts are provided by residues 21–28 and L47; that span reads AMSGGVDS. The active-site Nucleophile is the C115. Residues C115 and C211 are joined by a disulfide bond. G139 contacts ATP. The tract at residues 161-163 is interaction with tRNA; it reads RDQ. Catalysis depends on C211, which acts as the Cysteine persulfide intermediate.

This sequence belongs to the MnmA/TRMU family.

The protein localises to the cytoplasm. The enzyme catalyses S-sulfanyl-L-cysteinyl-[protein] + uridine(34) in tRNA + AH2 + ATP = 2-thiouridine(34) in tRNA + L-cysteinyl-[protein] + A + AMP + diphosphate + H(+). Functionally, catalyzes the 2-thiolation of uridine at the wobble position (U34) of tRNA, leading to the formation of s(2)U34. The protein is tRNA-specific 2-thiouridylase MnmA of Parvibaculum lavamentivorans (strain DS-1 / DSM 13023 / NCIMB 13966).